We begin with the raw amino-acid sequence, 460 residues long: Cysteine--tRNA ligase (460 aa).

Zn(2+) is bound at residue cysteine 28. The short motif at 30 to 40 is the 'HIGH' region element; the sequence is VTIYDLCHIGH. Residues cysteine 209, histidine 234, and glutamate 238 each contribute to the Zn(2+) site. A 'KMSKS' region motif is present at residues 266–270; the sequence is KMSKS. Lysine 269 lines the ATP pocket.

It belongs to the class-I aminoacyl-tRNA synthetase family. Monomer. Requires Zn(2+) as cofactor.

The protein resides in the cytoplasm. The catalysed reaction is tRNA(Cys) + L-cysteine + ATP = L-cysteinyl-tRNA(Cys) + AMP + diphosphate. The sequence is that of Cysteine--tRNA ligase from Shewanella frigidimarina (strain NCIMB 400).